Here is a 188-residue protein sequence, read N- to C-terminus: FMN-dependent NADPH-azoreductase (188 aa).

This sequence belongs to the azoreductase type 2 family. Homotetramer. Requires FMN as cofactor.

Catalyzes the reductive cleavage of azo bond in aromatic azo compounds to the corresponding amines. Requires NADPH, but not NADH, as an electron donor for its activity. The chain is FMN-dependent NADPH-azoreductase (azo1) from Staphylococcus saprophyticus subsp. saprophyticus (strain ATCC 15305 / DSM 20229 / NCIMB 8711 / NCTC 7292 / S-41).